We begin with the raw amino-acid sequence, 383 residues long: Opsin Rh4 (383 aa).

The Extracellular segment spans residues 1–57 (MDIAGSLCNASEGPVLRPEARVSGNGDLQFLGWNVPPDQIQHIPEHWLTQLEPPASM). N-linked (GlcNAc...) asparagine glycosylation occurs at Asn-9. Residues 58–82 (HYMLGVFYIFLFCASTVGNGMVIWI) traverse the membrane as a helical segment. The Cytoplasmic segment spans residues 83–94 (FSTSKALRTPSN). Residues 95 to 117 (MFVLNLAVFDFIMCLKAPIFIYN) form a helical membrane-spanning segment. The Extracellular segment spans residues 118–133 (SFHRGFALGNTGCQIF). A disulfide bond links Cys-130 and Cys-207. A helical transmembrane segment spans residues 134-153 (AAIGSYSGIGAGMTNAAIGY). At 154-171 (DRLNVITKPMNRNMTFTK) the chain is on the cytoplasmic side. Residues 172 to 196 (AIIMNVIIWLYCTPWVVLPLTQFWD) traverse the membrane as a helical segment. Residues 197–220 (RFVPEGYLTSCTFDYLTDNFDTRL) lie on the Extracellular side of the membrane. Residues 221–248 (FVGTIFFFSFVCPTLMIIYYYSQIVGHV) traverse the membrane as a helical segment. Residues 249–284 (FSHEKALREQAKKMNVESLRSNVDKSKDTAEIRIAK) are Cytoplasmic-facing. Residues 285-308 (AAITICFLFFVSWTPYGVMSLIGA) traverse the membrane as a helical segment. Topologically, residues 309 to 316 (FGDKSLLT) are extracellular. The chain crosses the membrane as a helical span at residues 317 to 341 (PGATMIPACTCKLVACIDPFVYAIS). N6-(retinylidene)lysine is present on Lys-328. Residues 342 to 383 (HPRYRMELQKRCPWLAIDEKAPESSSAASTTTTQEQQQTTAA) lie on the Cytoplasmic side of the membrane. The tract at residues 361-383 (KAPESSSAASTTTTQEQQQTTAA) is disordered. Over residues 364–383 (ESSSAASTTTTQEQQQTTAA) the composition is skewed to low complexity.

It belongs to the G-protein coupled receptor 1 family. Opsin subfamily. Post-translationally, phosphorylated on some or all of the serine and threonine residues present in the C-terminal region.

Its subcellular location is the membrane. Visual pigments are the light-absorbing molecules that mediate vision. They consist of an apoprotein, opsin, covalently linked to cis-retinal. The polypeptide is Opsin Rh4 (Rh4) (Drosophila virilis (Fruit fly)).